Consider the following 212-residue polypeptide: Orotate phosphoribosyltransferase (212 aa).

Residues Arg-97, Lys-101, His-103, and 123–131 (DDLISTGGS) each bind 5-phospho-alpha-D-ribose 1-diphosphate. Residue Ser-127 coordinates orotate.

Belongs to the purine/pyrimidine phosphoribosyltransferase family. PyrE subfamily. In terms of assembly, homodimer. The cofactor is Mg(2+).

The enzyme catalyses orotidine 5'-phosphate + diphosphate = orotate + 5-phospho-alpha-D-ribose 1-diphosphate. It participates in pyrimidine metabolism; UMP biosynthesis via de novo pathway; UMP from orotate: step 1/2. Functionally, catalyzes the transfer of a ribosyl phosphate group from 5-phosphoribose 1-diphosphate to orotate, leading to the formation of orotidine monophosphate (OMP). This is Orotate phosphoribosyltransferase from Lactiplantibacillus plantarum (strain ATCC BAA-793 / NCIMB 8826 / WCFS1) (Lactobacillus plantarum).